The chain runs to 409 residues: MNANERVIIVGAGHAGATVAMQLRKMDFAGDIILLGDERFSPYQRPPLSKAYLAGEEDAESLKLWPDEIYESKGIMLVQSATVAALDRAGKYVRLADKTEVSYDCLVIATGSRPREIALPGIHLAGVHRLHTIEDADGLKAAIGPGKRVALVGGGYIGLEVAASVVGLGGSAVVIEQQDRVLAGVASVPLSDYLRRAHEDRGVEFLTGVQVARIEGSKGRVTGIRLGDDRLVPCDAAVVCVGVVPNTGLAVAAGLDGANGIVVDHDARTADPAIFAIGDVTCRPMPLYDDRMFCLRSVPNALEQAKQAAAAMMGKPRPKPEVPWFWSHQFDLKVQIAGVPFDADDLVLRGDPAAGAFSAFHMKDGRVLAVETVDAPLEFAAGKQMILRKSVLSREQLVDPRVEVTALAV.

6 residues coordinate FAD: Ala-15, Asp-37, Lys-50, Val-83, Asp-279, and Val-298.

Belongs to the FAD-dependent oxidoreductase family. Requires FAD as cofactor.

It participates in terpene metabolism; monoterpene degradation. Functionally, involved in the degradation of the cyclic monoterpene limonene. Probably part of an electron transfer system involved in the oxidation of limonene to perillyl alcohol. This Castellaniella defragrans (strain DSM 12143 / CCUG 39792 / 65Phen) (Alcaligenes defragrans) protein is Probable ferredoxin reductase CtmF.